Consider the following 288-residue polypeptide: MSDPIDVAAETPGDGLPPLREVIATHGLDARRSLGQNFLFDLNLTGRIARAGGEIDQGTVIEIGPGPGGLTRALLGAGARRVIAIERDSRCRGVLAEIAAVWPGRLETIEGDALDIDVAALGEAPRRVIANLPYNVATPLLIGWLRHASAFERFVLMFQKEVVDRLAARPGTKDYGRLSVITQWLCEVRPLFDVNPRAFTPPPKVVSTVVRIDPRPQPLAPARMETLERVTAAAFGQRRKMLRASLKALGDAEGLCAAAGLDPTARAETIPVEGFAALARAVDAAGSV.

Residues asparagine 37, leucine 39, glycine 64, glutamate 86, aspartate 112, and asparagine 131 each coordinate S-adenosyl-L-methionine.

The protein belongs to the class I-like SAM-binding methyltransferase superfamily. rRNA adenine N(6)-methyltransferase family. RsmA subfamily.

The protein resides in the cytoplasm. The enzyme catalyses adenosine(1518)/adenosine(1519) in 16S rRNA + 4 S-adenosyl-L-methionine = N(6)-dimethyladenosine(1518)/N(6)-dimethyladenosine(1519) in 16S rRNA + 4 S-adenosyl-L-homocysteine + 4 H(+). Specifically dimethylates two adjacent adenosines (A1518 and A1519) in the loop of a conserved hairpin near the 3'-end of 16S rRNA in the 30S particle. May play a critical role in biogenesis of 30S subunits. The protein is Ribosomal RNA small subunit methyltransferase A of Rhodospirillum rubrum (strain ATCC 11170 / ATH 1.1.1 / DSM 467 / LMG 4362 / NCIMB 8255 / S1).